Here is a 212-residue protein sequence, read N- to C-terminus: 3-isopropylmalate dehydratase small subunit (212 aa).

Belongs to the LeuD family. LeuD type 1 subfamily. Heterodimer of LeuC and LeuD.

The enzyme catalyses (2R,3S)-3-isopropylmalate = (2S)-2-isopropylmalate. It functions in the pathway amino-acid biosynthesis; L-leucine biosynthesis; L-leucine from 3-methyl-2-oxobutanoate: step 2/4. Its function is as follows. Catalyzes the isomerization between 2-isopropylmalate and 3-isopropylmalate, via the formation of 2-isopropylmaleate. The chain is 3-isopropylmalate dehydratase small subunit from Pseudomonas aeruginosa (strain LESB58).